A 527-amino-acid polypeptide reads, in one-letter code: Tyrosine--tRNA ligase, cytoplasmic (527 aa).

An L-tyrosine-binding site is contributed by tyrosine 39. The 'HIGH' region signature appears at 44–52 (TTGKPHVAY). L-tyrosine is bound by residues tyrosine 166, glutamine 170, aspartate 173, and glutamine 188. Positions 222-226 (KMSSS) match the 'KMSKS' region motif. A Nuclear localization signal motif is present at residues 242 to 247 (KKKLKK). The interval 337–362 (TNAAYPNPSKAKPAEKGTKNSEPETI) is disordered. Basic and acidic residues predominate over residues 348 to 358 (KPAEKGTKNSE). The tRNA-binding domain maps to 363–467 (VPSRLDIRVG…AECCAGERVY (105 aa)).

The protein belongs to the class-I aminoacyl-tRNA synthetase family. As to quaternary structure, homodimer.

Its subcellular location is the cytoplasm. The protein resides in the nucleus. The catalysed reaction is tRNA(Tyr) + L-tyrosine + ATP = L-tyrosyl-tRNA(Tyr) + AMP + diphosphate + H(+). In terms of biological role, catalyzes the attachment of tyrosine to tRNA(Tyr) in a two-step reaction: tyrosine is first activated by ATP to form Tyr-AMP and then transferred to the acceptor end of tRNA(Tyr). The polypeptide is Tyrosine--tRNA ligase, cytoplasmic (YARS1) (Gallus gallus (Chicken)).